Here is a 212-residue protein sequence, read N- to C-terminus: MKLSKYIDHTLLKPQATEKDILKLIEEAKTYDFASVCVNPSWVKLAYENLKDTNVKVCTVVGFPLGATSIASKVYETKVAIEDGADEIDMVIAVGQLKSGNDEYVKEEIKKIVEASKDKLVKVIIETCLLTEEEKVKACTLSKEAGADYVKTSTGFSTGGAKPEDIKLMREAVGKDMGVKASGGIHTREEMEVMIENGATRIGASCGVELVK.

Residue aspartate 89 is the Proton donor/acceptor of the active site. Residue lysine 151 is the Schiff-base intermediate with acetaldehyde of the active site. Lysine 180 (proton donor/acceptor) is an active-site residue.

This sequence belongs to the DeoC/FbaB aldolase family. DeoC type 1 subfamily.

It localises to the cytoplasm. The enzyme catalyses 2-deoxy-D-ribose 5-phosphate = D-glyceraldehyde 3-phosphate + acetaldehyde. It participates in carbohydrate degradation; 2-deoxy-D-ribose 1-phosphate degradation; D-glyceraldehyde 3-phosphate and acetaldehyde from 2-deoxy-alpha-D-ribose 1-phosphate: step 2/2. In terms of biological role, catalyzes a reversible aldol reaction between acetaldehyde and D-glyceraldehyde 3-phosphate to generate 2-deoxy-D-ribose 5-phosphate. This is Deoxyribose-phosphate aldolase from Clostridium botulinum (strain Loch Maree / Type A3).